Here is a 505-residue protein sequence, read N- to C-terminus: ATP synthase subunit alpha, chloroplastic (505 aa).

170–177 contributes to the ATP binding site; the sequence is GDRQTGKT.

This sequence belongs to the ATPase alpha/beta chains family. F-type ATPases have 2 components, CF(1) - the catalytic core - and CF(0) - the membrane proton channel. CF(1) has five subunits: alpha(3), beta(3), gamma(1), delta(1), epsilon(1). CF(0) has four main subunits: a, b, b' and c.

Its subcellular location is the plastid. It localises to the chloroplast thylakoid membrane. The catalysed reaction is ATP + H2O + 4 H(+)(in) = ADP + phosphate + 5 H(+)(out). Its function is as follows. Produces ATP from ADP in the presence of a proton gradient across the membrane. The alpha chain is a regulatory subunit. This Oenothera parviflora (Small-flowered evening primrose) protein is ATP synthase subunit alpha, chloroplastic.